A 441-amino-acid chain; its full sequence is ATP-dependent protease ATPase subunit HslU (441 aa).

ATP-binding positions include isoleucine 18, 60–65, aspartate 254, glutamate 319, and arginine 391; that span reads GVGKTE.

This sequence belongs to the ClpX chaperone family. HslU subfamily. A double ring-shaped homohexamer of HslV is capped on each side by a ring-shaped HslU homohexamer. The assembly of the HslU/HslV complex is dependent on binding of ATP.

The protein localises to the cytoplasm. In terms of biological role, ATPase subunit of a proteasome-like degradation complex; this subunit has chaperone activity. The binding of ATP and its subsequent hydrolysis by HslU are essential for unfolding of protein substrates subsequently hydrolyzed by HslV. HslU recognizes the N-terminal part of its protein substrates and unfolds these before they are guided to HslV for hydrolysis. In Shewanella pealeana (strain ATCC 700345 / ANG-SQ1), this protein is ATP-dependent protease ATPase subunit HslU.